A 152-amino-acid chain; its full sequence is Ribonuclease H (152 aa).

The RNase H type-1 domain occupies 6–147 (KKNNVIAYTD…ADELANKAIA (142 aa)). Residues aspartate 15, glutamate 53, aspartate 75, and aspartate 139 each contribute to the Mg(2+) site.

This sequence belongs to the RNase H family. Monomer. The cofactor is Mg(2+).

It localises to the cytoplasm. It carries out the reaction Endonucleolytic cleavage to 5'-phosphomonoester.. Endonuclease that specifically degrades the RNA of RNA-DNA hybrids. This chain is Ribonuclease H, found in Francisella philomiragia subsp. philomiragia (strain ATCC 25017 / CCUG 19701 / FSC 153 / O#319-036).